A 294-amino-acid polypeptide reads, in one-letter code: Elongation factor Ts (294 aa).

The involved in Mg(2+) ion dislocation from EF-Tu stretch occupies residues 79–82; sequence TDFV.

It belongs to the EF-Ts family.

It localises to the cytoplasm. Associates with the EF-Tu.GDP complex and induces the exchange of GDP to GTP. It remains bound to the aminoacyl-tRNA.EF-Tu.GTP complex up to the GTP hydrolysis stage on the ribosome. This is Elongation factor Ts (tsf) from Geobacillus kaustophilus (strain HTA426).